We begin with the raw amino-acid sequence, 257 residues long: tRNA pseudouridine synthase A (257 aa).

Asp53 serves as the catalytic Nucleophile. Tyr111 contacts substrate.

Belongs to the tRNA pseudouridine synthase TruA family. In terms of assembly, homodimer.

The enzyme catalyses uridine(38/39/40) in tRNA = pseudouridine(38/39/40) in tRNA. Formation of pseudouridine at positions 38, 39 and 40 in the anticodon stem and loop of transfer RNAs. The polypeptide is tRNA pseudouridine synthase A (Xylella fastidiosa (strain M23)).